Consider the following 742-residue polypeptide: ATP-dependent RNA helicase DBP7 (742 aa).

The tract at residues 45–100 (GKTVSRKRKANTTGDEGIIPGRGENSIKKLHKESSYSSEEQEKYKGRNAHNTQGRT) is disordered. Positions 143 to 172 (DQFASLGVTSLLVSHLEQKMRIKKPTSIQK) match the Q motif motif. The 195-residue stretch at 178 to 372 (IIGNAGKNDF…NVALKDYKLI (195 aa)) folds into the Helicase ATP-binding domain. 191–198 (AQTGSGKT) serves as a coordination point for ATP. Residues 307 to 310 (DEGD) carry the DEAD box motif. Positions 405-605 (TLAATLNNIT…ILMPAFKDVN (201 aa)) constitute a Helicase C-terminal domain. Residues 701–726 (AMGLQSSKDGNSEKKPTKENSKNKMF) form a disordered region. Basic and acidic residues predominate over residues 710–722 (GNSEKKPTKENSK).

Belongs to the DEAD box helicase family. DDX31/DBP7 subfamily.

It localises to the nucleus. Its subcellular location is the nucleolus. It catalyses the reaction ATP + H2O = ADP + phosphate + H(+). In terms of biological role, ATP-binding RNA helicase involved in the biogenesis of 60S ribosomal subunits and is required for the normal formation of 25S and 5.8S rRNAs. This is ATP-dependent RNA helicase DBP7 (DBP7) from Saccharomyces cerevisiae (strain YJM789) (Baker's yeast).